The sequence spans 273 residues: Urease accessory protein UreD (273 aa).

Belongs to the UreD family. As to quaternary structure, ureD, UreF and UreG form a complex that acts as a GTP-hydrolysis-dependent molecular chaperone, activating the urease apoprotein by helping to assemble the nickel containing metallocenter of UreC. The UreE protein probably delivers the nickel.

The protein localises to the cytoplasm. Its function is as follows. Required for maturation of urease via the functional incorporation of the urease nickel metallocenter. This is Urease accessory protein UreD from Bacillus cereus (strain ATCC 10987 / NRS 248).